Consider the following 331-residue polypeptide: tRNA (guanine-N(7)-)-methyltransferase (331 aa).

S-adenosyl-L-methionine-binding residues include Glu-29, Glu-55, and Asp-105. The active site involves Asp-105. Positions 109 and 141 each coordinate substrate.

Belongs to the class I-like SAM-binding methyltransferase superfamily. TrmB family.

It carries out the reaction guanosine(46) in tRNA + S-adenosyl-L-methionine = N(7)-methylguanosine(46) in tRNA + S-adenosyl-L-homocysteine. The protein operates within tRNA modification; N(7)-methylguanine-tRNA biosynthesis. In terms of biological role, catalyzes the formation of N(7)-methylguanine at position 46 (m7G46) in tRNA. In Deinococcus geothermalis (strain DSM 11300 / CIP 105573 / AG-3a), this protein is tRNA (guanine-N(7)-)-methyltransferase.